We begin with the raw amino-acid sequence, 174 residues long: Sarcoplasmic calcium-binding protein (174 aa).

Ser-1 carries the post-translational modification N-acetylserine. EF-hand domains lie at 3–38 (LWVQKMKTYFNRIDFDKDGAITRMDFESMAERFAKE), 55–90 (GVWDNFLTAVAGGKGIDETTFINSMKEMVKNPEAKS), 91–126 (VVEGPLPLFFRAVDTNEDNNISRDEYGIFFGMLGLD), and 127–160 (KTMAPASFDAIDTNNDGLLSLEEFVIAGSDFFMN). Ca(2+) contacts are provided by Asp-16, Asp-18, Asp-20, and Asp-27. Residues Asp-104, Asn-106, Asp-108, Asn-110, Glu-115, Asp-138, Asn-140, Asp-142, and Glu-149 each contribute to the Ca(2+) site.

Functionally, like parvalbumins, SCPs seem to be more abundant in fast contracting muscles, but no functional relationship can be established from this distribution. This Hediste diversicolor (Sandworm) protein is Sarcoplasmic calcium-binding protein.